The sequence spans 500 residues: Tektin-like protein 1 (500 aa).

Residues 198 to 229 are a coiled coil; that stretch reads MLTWEKEELKSMKRKMEADMEKSEALLKTLAS. The residue at position 372 (Tyr372) is a Phosphotyrosine. The stretch at 420–444 forms a coiled coil; that stretch reads DKLQRHISHVEKNLDELLSMRKKLT.

Microtubule inner protein component of sperm flagellar doublet microtubules.

It localises to the cytoplasm. It is found in the cytoskeleton. The protein localises to the flagellum axoneme. Its function is as follows. Microtubule inner protein (MIP) part of the dynein-decorated doublet microtubules (DMTs) in sperm flagellar axoneme, which is required for motile flagellum beating. Forms an extensive interaction network cross-linking the lumen of axonemal doublet microtubules. The protein is Tektin-like protein 1 of Bos taurus (Bovine).